The primary structure comprises 176 residues: MDYFTLFGLPARYQLDTQALSLRFQDLQRQYHPDKFASGSQAEQLAAVQQSATINQAWQTLRHPLMRAEYLLSLHGFDLASEQHTVRDTAFLMEQLELREELDEIEQAKDEARLESFIKRVKKMFDTRHQLMVEQLDNETWDAAADTVRKLRFLDKLRSSAEQLEEKLLDFLISGS.

The region spanning 2–74 (DYFTLFGLPA…LMRAEYLLSL (73 aa)) is the J domain.

The protein belongs to the HscB family. As to quaternary structure, interacts with HscA and stimulates its ATPase activity. Interacts with IscU.

Functionally, co-chaperone involved in the maturation of iron-sulfur cluster-containing proteins. Seems to help targeting proteins to be folded toward HscA. This Escherichia coli O7:K1 (strain IAI39 / ExPEC) protein is Co-chaperone protein HscB.